The chain runs to 336 residues: Monoacylglycerol lipase ABHD6 (336 aa).

The Extracellular portion of the chain corresponds to 1 to 8; it reads MDLDVVNM. The helical; Signal-anchor for type II membrane protein transmembrane segment at 9–29 threads the bilayer; it reads FVIAGGTLAIPILAFVASFLL. At 30–336 the chain is on the cytoplasmic side; it reads WPSALIRIYY…VHNTDNKKLN (307 aa). The active-site Nucleophile is S148. Residues D278 and H306 each act as charge relay system in the active site.

Belongs to the AB hydrolase superfamily. Widely expressed with higher expression in small intestine, liver and brown adipose tissue. In brain, expressed postsynaptically in cortical neurons but not detected in microglia (at protein level).

It localises to the late endosome membrane. The protein resides in the lysosome membrane. It is found in the mitochondrion membrane. The catalysed reaction is Hydrolyzes glycerol monoesters of long-chain fatty acids.. It catalyses the reaction 2-(5Z,8Z,11Z,14Z-eicosatetraenoyl)-glycerol + H2O = glycerol + (5Z,8Z,11Z,14Z)-eicosatetraenoate + H(+). The enzyme catalyses 1-octanoylglycerol + H2O = octanoate + glycerol + H(+). It carries out the reaction 1-decanoylglycerol + H2O = decanoate + glycerol + H(+). The catalysed reaction is 1-dodecanoylglycerol + H2O = dodecanoate + glycerol + H(+). It catalyses the reaction 1-tetradecanoylglycerol + H2O = tetradecanoate + glycerol + H(+). The enzyme catalyses 2-hexadecanoylglycerol + H2O = glycerol + hexadecanoate + H(+). It carries out the reaction 2-(9Z-octadecenoyl)-glycerol + H2O = glycerol + (9Z)-octadecenoate + H(+). The catalysed reaction is 1-(9Z-octadecenoyl)-glycerol + H2O = glycerol + (9Z)-octadecenoate + H(+). It catalyses the reaction 2-(9Z,12Z-octadecadienoyl)-glycerol + H2O = (9Z,12Z)-octadecadienoate + glycerol + H(+). The enzyme catalyses 1-(5Z,8Z,11Z,14Z-eicosatetraenoyl)-glycerol + H2O = glycerol + (5Z,8Z,11Z,14Z)-eicosatetraenoate + H(+). It carries out the reaction 1-(9Z,12Z-octadecadienoyl)-glycerol + H2O = (9Z,12Z)-octadecadienoate + glycerol + H(+). The catalysed reaction is 3-(9Z-octadecenoyl)-sn-glycero-1-phospho-(3'-(9Z-octadecenoyl)-1'-sn-glycerol) + H2O = 3-(9Z-octadecenoyl)-sn-glycero-1-phospho-(1'-sn-glycerol) + (9Z)-octadecenoate + H(+). It catalyses the reaction (S,S)-2-(9Z-octadecenoyl)-sn-glycero-1-phospho-(2'-(9Z-octadecenoyl)-1'-sn-glycerol) + H2O = (S,S)-2-(9Z-octadecenoyl)-sn-glycero-1-phospho-(1'-sn-glycerol) + (9Z)-octadecenoate + H(+). The enzyme catalyses (R,R)-2-(9Z-octadecenoyl)-sn-glycero-3-phospho-(2'-(9Z-octadecenoyl)-3'-sn-glycerol) + H2O = (R,R)-2-(9Z-octadecenoyl)-sn-glycero-3-phospho-(3'-sn-glycerol) + (9Z)-octadecenoate + H(+). In terms of biological role, lipase that preferentially hydrolysis medium-chain saturated monoacylglycerols including 2-arachidonoylglycerol. Through 2-arachidonoylglycerol degradation may regulate endocannabinoid signaling pathways. Also has a lysophosphatidyl lipase activity with a preference for lysophosphatidylglycerol among other lysophospholipids. Also able to degrade bis(monoacylglycero)phosphate (BMP) and constitutes the major enzyme for BMP catabolism. BMP, also known as lysobisphosphatidic acid, is enriched in late endosomes and lysosomes and plays a key role in the formation of intraluminal vesicles and in lipid sorting. In Mus musculus (Mouse), this protein is Monoacylglycerol lipase ABHD6.